Here is a 418-residue protein sequence, read N- to C-terminus: Protease LasA (418 aa).

The N-terminal stretch at Met1 to Ala31 is a signal peptide. The propeptide occupies His32–Leu236. His259 and Asp272 together coordinate Zn(2+). Residues Cys301 and Cys347 are joined by a disulfide bond. Active-site proton donor/acceptor residues include His317 and His356. His358 serves as a coordination point for Zn(2+). Cys391 and Cys406 form a disulfide bridge.

Belongs to the peptidase M23A family. Requires Zn(2+) as cofactor. Post-translationally, processing of pro-LasA can occur extracellularly and requires elastase (lasB). Secretion and processing may be linked.

The protein resides in the secreted. Functionally, involved in proteolysis and elastolysis (degradation of the host protein elastin). Has staphylolytic activity (degrades pentaglycine cross-links in cell wall peptidoglycan), preferring Gly-Gly-|-X substrates where X is Ala or Gly. Enhances the elastolytic but not proteolytic activity of elastase (lasB) and elastolytic activity of other proteases. Degradation of host elastin is likely to contribute to the pathogenicity of P.aeruginosa. While either His-317 or His-356 can abstract a proton in the hydrolysis reaction, the same residue performs both functions in a given catalytic cycle, with the other stabilizing the catalytic intermediate. The polypeptide is Protease LasA (lasA) (Pseudomonas aeruginosa (strain ATCC 15692 / DSM 22644 / CIP 104116 / JCM 14847 / LMG 12228 / 1C / PRS 101 / PAO1)).